A 50-amino-acid chain; its full sequence is LTTTVVSFPSDSASDGRDNEAKDERSDMYELKRNGRCCHPACGKYFKCGR.

Positions 1 to 7 are cleaved as a signal peptide; that stretch reads LTTTVVS. Positions 1 to 13 are enriched in polar residues; it reads LTTTVVSFPSDSA. The tract at residues 1–26 is disordered; it reads LTTTVVSFPSDSASDGRDNEAKDERS. Residues 8–35 constitute a propeptide that is removed on maturation; that stretch reads FPSDSASDGRDNEAKDERSDMYELKRNG. Over residues 14 to 26 the composition is skewed to basic and acidic residues; that stretch reads SDGRDNEAKDERS. 2 cysteine pairs are disulfide-bonded: C37–C42 and C38–C48. A Cysteine amide modification is found at C48.

This sequence belongs to the conotoxin A superfamily. In terms of tissue distribution, expressed by the venom duct.

It is found in the secreted. The chain is Alpha-conotoxin CnIG from Conus consors (Singed cone).